The chain runs to 271 residues: Regulatory protein RecX (271 aa).

The protein belongs to the RecX family.

The protein localises to the cytoplasm. Functionally, modulates RecA activity. The chain is Regulatory protein RecX from Lactobacillus gasseri (strain ATCC 33323 / DSM 20243 / BCRC 14619 / CIP 102991 / JCM 1131 / KCTC 3163 / NCIMB 11718 / NCTC 13722 / AM63).